The primary structure comprises 396 residues: Enoyl-[acyl-carrier-protein] reductase [NADH] (396 aa).

Residues 47–52, 73–74, 110–111, and 138–139 each bind NAD(+); these read GASTGF, FE, DA, and LA. Position 224 (Tyr224) interacts with substrate. The active-site Proton donor is Tyr234. Residues Lys243 and 272-274 each bind NAD(+); that span reads LVT.

The protein belongs to the TER reductase family. As to quaternary structure, monomer.

The enzyme catalyses a 2,3-saturated acyl-[ACP] + NAD(+) = a (2E)-enoyl-[ACP] + NADH + H(+). It participates in lipid metabolism; fatty acid biosynthesis. Its function is as follows. Involved in the final reduction of the elongation cycle of fatty acid synthesis (FAS II). Catalyzes the reduction of a carbon-carbon double bond in an enoyl moiety that is covalently linked to an acyl carrier protein (ACP). This is Enoyl-[acyl-carrier-protein] reductase [NADH] from Cytophaga hutchinsonii (strain ATCC 33406 / DSM 1761 / CIP 103989 / NBRC 15051 / NCIMB 9469 / D465).